The primary structure comprises 355 residues: Anthranilate phosphoribosyltransferase (355 aa).

5-phospho-alpha-D-ribose 1-diphosphate-binding positions include G99, G102–D103, T107, N109–T112, K127–S135, and S139. Anthranilate is bound at residue G99. Residue S111 participates in Mg(2+) binding. N130 is an anthranilate binding site. R185 provides a ligand contact to anthranilate. 2 residues coordinate Mg(2+): D243 and E244.

This sequence belongs to the anthranilate phosphoribosyltransferase family. As to quaternary structure, homodimer. The cofactor is Mg(2+).

It catalyses the reaction N-(5-phospho-beta-D-ribosyl)anthranilate + diphosphate = 5-phospho-alpha-D-ribose 1-diphosphate + anthranilate. Its pathway is amino-acid biosynthesis; L-tryptophan biosynthesis; L-tryptophan from chorismate: step 2/5. In terms of biological role, catalyzes the transfer of the phosphoribosyl group of 5-phosphorylribose-1-pyrophosphate (PRPP) to anthranilate to yield N-(5'-phosphoribosyl)-anthranilate (PRA). The sequence is that of Anthranilate phosphoribosyltransferase from Pseudoalteromonas translucida (strain TAC 125).